The chain runs to 519 residues: Aldehyde dehydrogenase X, mitochondrial (519 aa).

Residues 1 to 19 (MLNARFLVPRLLCLQGRTT) constitute a mitochondrion transit peptide. K53 is modified (N6-acetyllysine). K54 is modified (N6-acetyllysine; alternate). K54 carries the post-translational modification N6-succinyllysine; alternate. 264-269 (GSTEVG) provides a ligand contact to NAD(+). The Proton acceptor role is filled by E287. Residue C321 is the Nucleophile of the active site. N6-acetyllysine; alternate occurs at positions 366, 385, 401, and 428. N6-succinyllysine; alternate is present on residues K366, K385, K401, and K428. K431 carries the post-translational modification N6-acetyllysine.

Belongs to the aldehyde dehydrogenase family. In terms of assembly, homotetramer.

It localises to the mitochondrion matrix. It carries out the reaction an aldehyde + NAD(+) + H2O = a carboxylate + NADH + 2 H(+). The protein operates within alcohol metabolism; ethanol degradation; acetate from ethanol: step 2/2. ALDHs play a major role in the detoxification of alcohol-derived acetaldehyde. They are involved in the metabolism of corticosteroids, biogenic amines, neurotransmitters, and lipid peroxidation. The sequence is that of Aldehyde dehydrogenase X, mitochondrial (Aldh1b1) from Rattus norvegicus (Rat).